Consider the following 322-residue polypeptide: AA9 family lytic polysaccharide monooxygenase B (322 aa).

An N-terminal signal peptide occupies residues Met1–Ala17. Cu(2+) is bound at residue His18. 2 N-linked (GlcNAc...) asparagine glycosylation sites follow: Asn53 and Asn68. Cys56 and Cys173 are oxidised to a cystine. His87 is a binding site for Cu(2+). 2 N-linked (GlcNAc...) asparagine glycosylation sites follow: Asn121 and Asn133. O2 is bound by residues His159 and Gln168. Tyr170 contributes to the Cu(2+) binding site. Asn197 carries an N-linked (GlcNAc...) asparagine glycan.

This sequence belongs to the polysaccharide monooxygenase AA9 family. Requires Cu(2+) as cofactor.

Its subcellular location is the secreted. It catalyses the reaction [(1-&gt;4)-beta-D-glucosyl]n+m + reduced acceptor + O2 = 4-dehydro-beta-D-glucosyl-[(1-&gt;4)-beta-D-glucosyl]n-1 + [(1-&gt;4)-beta-D-glucosyl]m + acceptor + H2O.. In terms of biological role, lytic polysaccharide monooxygenase (LPMO) that depolymerizes crystalline and amorphous polysaccharides via the oxidation of scissile alpha- or beta-(1-4)-glycosidic bonds, yielding C1 and C4 oxidation products. Catalysis by LPMOs requires the reduction of the active-site copper from Cu(II) to Cu(I) by a reducing agent and H(2)O(2) or O(2) as a cosubstrate. This is AA9 family lytic polysaccharide monooxygenase B from Botryotinia fuckeliana (strain B05.10) (Noble rot fungus).